The following is a 338-amino-acid chain: UbiA prenyltransferase domain-containing protein 1 (338 aa).

At Ala2 the chain carries N-acetylalanine. 8 helical membrane passes run 83 to 103 (LLVG…LVNT), 134 to 154 (FGVF…YLSP), 160 to 180 (LALI…GIGF), 188 to 208 (LIIL…IQVG), 209 to 229 (SLAI…EAIL), 245 to 267 (IVTL…LLFL), 277 to 297 (THCT…FSLE), and 315 to 335 (LNLL…AGSL).

It belongs to the UbiA prenyltransferase family. As to quaternary structure, interacts with HMGCR and SOAT1. As to expression, ubiquitously expressed.

It localises to the endoplasmic reticulum membrane. The protein resides in the golgi apparatus membrane. It is found in the mitochondrion membrane. The protein localises to the cytoplasm. Its subcellular location is the nucleus. It carries out the reaction menadiol + (2E,6E,10E)-geranylgeranyl diphosphate = menaquinol-4 + diphosphate. The catalysed reaction is all-trans-decaprenyl diphosphate + 4-hydroxybenzoate = 4-hydroxy-3-(all-trans-decaprenyl)benzoate + diphosphate. Its pathway is quinol/quinone metabolism; menaquinone biosynthesis. It functions in the pathway cofactor biosynthesis; ubiquinone biosynthesis. Its function is as follows. Prenyltransferase that mediates the formation of menaquinone-4 (MK-4) and coenzyme Q10. MK-4 is a vitamin K2 isoform present at high concentrations in the brain, kidney and pancreas, and is required for endothelial cell development. Mediates the conversion of phylloquinone (PK) into MK-4, probably by cleaving the side chain of phylloquinone (PK) to release 2-methyl-1,4-naphthoquinone (menadione; K3) and then prenylating it with geranylgeranyl pyrophosphate (GGPP) to form MK-4. Also plays a role in cardiovascular development independently of MK-4 biosynthesis, by acting as a coenzyme Q10 biosynthetic enzyme: coenzyme Q10, also named ubiquinone, plays an important antioxidant role in the cardiovascular system. Mediates biosynthesis of coenzyme Q10 in the Golgi membrane, leading to protect cardiovascular tissues from NOS3/eNOS-dependent oxidative stress. The protein is UbiA prenyltransferase domain-containing protein 1 of Homo sapiens (Human).